The sequence spans 217 residues: Meiotically up-regulated gene 37 protein (217 aa).

Its function is as follows. Has a role in meiosis. This Schizosaccharomyces pombe (strain 972 / ATCC 24843) (Fission yeast) protein is Meiotically up-regulated gene 37 protein (mug37).